Here is a 345-residue protein sequence, read N- to C-terminus: Biotin synthase (345 aa).

Positions 38-256 (GEVQVSTLLS…IAVARIMMPR (219 aa)) constitute a Radical SAM core domain. Positions 53, 57, and 60 each coordinate [4Fe-4S] cluster. [2Fe-2S] cluster is bound by residues Cys97, Cys128, Cys188, and Arg260.

Belongs to the radical SAM superfamily. Biotin synthase family. Homodimer. It depends on [4Fe-4S] cluster as a cofactor. Requires [2Fe-2S] cluster as cofactor.

The catalysed reaction is (4R,5S)-dethiobiotin + (sulfur carrier)-SH + 2 reduced [2Fe-2S]-[ferredoxin] + 2 S-adenosyl-L-methionine = (sulfur carrier)-H + biotin + 2 5'-deoxyadenosine + 2 L-methionine + 2 oxidized [2Fe-2S]-[ferredoxin]. Its pathway is cofactor biosynthesis; biotin biosynthesis; biotin from 7,8-diaminononanoate: step 2/2. In terms of biological role, catalyzes the conversion of dethiobiotin (DTB) to biotin by the insertion of a sulfur atom into dethiobiotin via a radical-based mechanism. This is Biotin synthase from Sodalis glossinidius (strain morsitans).